The following is a 192-amino-acid chain: Ion-translocating oxidoreductase complex subunit A (192 aa).

A run of 6 helical transmembrane segments spans residues 5–25 (ALIL…FLGL), 39–59 (TGMG…SYLV), 65–85 (APLG…AAVV), 102–122 (VLGI…VALL), 134–154 (ALYG…FASI), and 171–191 (AIAL…IGLV).

This sequence belongs to the NqrDE/RnfAE family. In terms of assembly, the complex is composed of six subunits: RnfA, RnfB, RnfC, RnfD, RnfE and RnfG.

It localises to the cell inner membrane. Its function is as follows. Part of a membrane-bound complex that couples electron transfer with translocation of ions across the membrane. The polypeptide is Ion-translocating oxidoreductase complex subunit A (Thioalkalivibrio sulfidiphilus (strain HL-EbGR7)).